Here is a 585-residue protein sequence, read N- to C-terminus: Testis-specific serine kinase substrate (585 aa).

Over residues 91-108 the composition is skewed to low complexity; it reads EPDSSGTDSTTEDSGPLA. The tract at residues 91–125 is disordered; the sequence is EPDSSGTDSTTEDSGPLALPGPPASPTTPWAPEDP. Phosphoserine is present on Ser224. Disordered stretches follow at residues 264 to 312 and 559 to 585; these read HGLS…SEQE and LEGS…GSEQ. Residue Ser281 is modified to Phosphoserine; by TSSK1 and TSSK2. Position 309 is a phosphoserine (Ser309).

Post-translationally, phosphorylated on serine residue(s) by STK22A/TSSK1 and STK22B/TSSK2. As to expression, testis specific.

It is found in the cytoplasm. It localises to the cytoskeleton. Its subcellular location is the microtubule organizing center. The protein resides in the centrosome. The protein localises to the centriole. It is found in the cytoplasmic vesicle. It localises to the secretory vesicle. Its subcellular location is the acrosome. Its function is as follows. May play a role in testicular physiology, most probably in the process of spermatogenesis or spermatid development. In Mus musculus (Mouse), this protein is Testis-specific serine kinase substrate (Tsks).